The sequence spans 176 residues: RNA pyrophosphohydrolase (176 aa).

A Nudix hydrolase domain is found at 6–149 (GYRPNVGIIL…KRQVYQQALF (144 aa)). A Nudix box motif is present at residues 38 to 59 (GGIKHGESPEQAMFRELFEEVG).

It belongs to the Nudix hydrolase family. RppH subfamily. A divalent metal cation is required as a cofactor.

In terms of biological role, accelerates the degradation of transcripts by removing pyrophosphate from the 5'-end of triphosphorylated RNA, leading to a more labile monophosphorylated state that can stimulate subsequent ribonuclease cleavage. This is RNA pyrophosphohydrolase from Aromatoleum aromaticum (strain DSM 19018 / LMG 30748 / EbN1) (Azoarcus sp. (strain EbN1)).